Here is a 393-residue protein sequence, read N- to C-terminus: Phosphoglycerate kinase (393 aa).

Residues 21-23, Arg36, 59-62, Arg114, and Arg147 contribute to the substrate site; these read DLN and HLGR. ATP-binding positions include Lys198, Glu320, and 346-349; that span reads GGDT.

The protein belongs to the phosphoglycerate kinase family. In terms of assembly, monomer.

The protein resides in the cytoplasm. It carries out the reaction (2R)-3-phosphoglycerate + ATP = (2R)-3-phospho-glyceroyl phosphate + ADP. Its pathway is carbohydrate degradation; glycolysis; pyruvate from D-glyceraldehyde 3-phosphate: step 2/5. In Methylobacillus flagellatus (strain ATCC 51484 / DSM 6875 / VKM B-1610 / KT), this protein is Phosphoglycerate kinase.